A 375-amino-acid polypeptide reads, in one-letter code: Decapping and exoribonuclease protein Rai1 (375 aa).

Substrate is bound by residues Arg43 and 120–122 (LRG). Mg(2+) is bound by residues Glu180, Glu222, Asp224, Glu247, and Leu248. Glu222 provides a ligand contact to substrate. 2 residues coordinate substrate: Lys249 and Gln274.

Belongs to the DXO/Dom3Z family. In terms of assembly, interacts with Rat1. Mg(2+) is required as a cofactor.

It catalyses the reaction a 5'-end triphospho-ribonucleoside in mRNA + H2O = a 5'-end phospho-ribonucleoside in mRNA + diphosphate + H(+). The catalysed reaction is a 5'-end NAD(+)-phospho-ribonucleoside in mRNA + H2O = a 5'-end phospho-ribonucleoside in mRNA + NAD(+) + H(+). It carries out the reaction a 5'-end (N(7)-methyl 5'-triphosphoguanosine)-ribonucleoside-ribonucleotide in mRNA + H2O = a (N(7)-methyl 5'-triphosphoguanosine)-nucleoside + a 5'-end phospho-ribonucleoside in mRNA + H(+). Functionally, decapping enzyme for NAD-capped RNAs: specifically hydrolyzes the nicotinamide adenine dinucleotide (NAD) cap from a subset of RNAs by removing the entire NAD moiety from the 5'-end of an NAD-capped RNA. The NAD-cap is present at the 5'-end of some RNAs and snoRNAs. In contrast to the canonical 5'-end N7 methylguanosine (m7G) cap, the NAD cap promotes mRNA decay. Also acts as a non-canonical decapping enzyme that removes the entire cap structure of m7G capped or incompletely capped RNAs and mediates their subsequent degradation. Specifically degrades pre-mRNAs with a defective 5'-end m7G cap and is part of a pre-mRNA capping quality control. Possesses 5'-pyrophosphohydrolase activity, hydrolyzing the 5'-end triphosphate to release pyrophosphates, and 5'-3' exonuclease activity. May be involved in RNA degradation in the nucleus. The chain is Decapping and exoribonuclease protein Rai1 from Drosophila melanogaster (Fruit fly).